A 270-amino-acid chain; its full sequence is Cell division protein DivIB (270 aa).

At 1–38 the chain is on the cytoplasmic side; sequence MTRRNNPELNDEREPIDKIKASIDLKKKTIRRNKRKRR. The chain crosses the membrane as a helical span at residues 39–59; sequence LIKMLQFLIVIGVLIGIYYFD. The Extracellular portion of the chain corresponds to 60–270; sequence KSDASRVHNV…QSAVVKACGS (211 aa). In terms of domain architecture, POTRA spans 64 to 135; it reads SRVHNVRVNG…INLNVTEKKA (72 aa).

It belongs to the FtsQ/DivIB family. DivIB subfamily.

It localises to the cell membrane. Functionally, cell division protein that may be involved in stabilizing or promoting the assembly of the division complex. The sequence is that of Cell division protein DivIB from Erysipelothrix rhusiopathiae (strain Fujisawa).